A 242-amino-acid polypeptide reads, in one-letter code: Uridylate kinase (242 aa).

ATP is bound at residue 12 to 15 (KLSG). The segment at 20–25 (GQKGYG) is involved in allosteric activation by GTP. G54 contributes to the UMP binding site. ATP contacts are provided by G55 and R59. UMP is bound by residues D74 and 135-142 (TGNPYFST). Residues Q163, Y168, and D171 each coordinate ATP.

The protein belongs to the UMP kinase family. In terms of assembly, homohexamer.

It localises to the cytoplasm. It catalyses the reaction UMP + ATP = UDP + ADP. Its pathway is pyrimidine metabolism; CTP biosynthesis via de novo pathway; UDP from UMP (UMPK route): step 1/1. With respect to regulation, allosterically activated by GTP. Inhibited by UTP. Catalyzes the reversible phosphorylation of UMP to UDP. The protein is Uridylate kinase of Desulforamulus reducens (strain ATCC BAA-1160 / DSM 100696 / MI-1) (Desulfotomaculum reducens).